The sequence spans 449 residues: tRNA-2-methylthio-N(6)-dimethylallyladenosine synthase (449 aa).

The MTTase N-terminal domain maps to 13 to 128 (RRIFIETYGC…LPHLIGTVEK (116 aa)). The [4Fe-4S] cluster site is built by Cys-22, Cys-58, Cys-92, Cys-166, Cys-170, and Cys-173. The region spanning 152–383 (SRIKISGFIS…ITLQLKISLM (232 aa)) is the Radical SAM core domain. Residues 386 to 449 (KENIGKTMEI…AATLFGDPKL (64 aa)) enclose the TRAM domain.

The protein belongs to the methylthiotransferase family. MiaB subfamily. Monomer. [4Fe-4S] cluster serves as cofactor.

The protein resides in the cytoplasm. The enzyme catalyses N(6)-dimethylallyladenosine(37) in tRNA + (sulfur carrier)-SH + AH2 + 2 S-adenosyl-L-methionine = 2-methylsulfanyl-N(6)-dimethylallyladenosine(37) in tRNA + (sulfur carrier)-H + 5'-deoxyadenosine + L-methionine + A + S-adenosyl-L-homocysteine + 2 H(+). Catalyzes the methylthiolation of N6-(dimethylallyl)adenosine (i(6)A), leading to the formation of 2-methylthio-N6-(dimethylallyl)adenosine (ms(2)i(6)A) at position 37 in tRNAs that read codons beginning with uridine. This Azobacteroides pseudotrichonymphae genomovar. CFP2 protein is tRNA-2-methylthio-N(6)-dimethylallyladenosine synthase.